Here is a 200-residue protein sequence, read N- to C-terminus: GTP cyclohydrolase-2 (200 aa).

Position 49 to 53 (49 to 53 (RIHSE)) interacts with GTP. Zn(2+) is bound by residues Cys54, Cys65, and Cys67. GTP-binding positions include Gln70, 92–94 (EGR), and Thr114. Asp126 serves as the catalytic Proton acceptor. Arg128 functions as the Nucleophile in the catalytic mechanism. GTP contacts are provided by Thr149 and Lys154.

This sequence belongs to the GTP cyclohydrolase II family. The cofactor is Zn(2+).

It catalyses the reaction GTP + 4 H2O = 2,5-diamino-6-hydroxy-4-(5-phosphoribosylamino)-pyrimidine + formate + 2 phosphate + 3 H(+). Its pathway is cofactor biosynthesis; riboflavin biosynthesis; 5-amino-6-(D-ribitylamino)uracil from GTP: step 1/4. Functionally, catalyzes the conversion of GTP to 2,5-diamino-6-ribosylamino-4(3H)-pyrimidinone 5'-phosphate (DARP), formate and pyrophosphate. In Saccharophagus degradans (strain 2-40 / ATCC 43961 / DSM 17024), this protein is GTP cyclohydrolase-2.